The following is a 284-amino-acid chain: Polyamine aminopropyltransferase (284 aa).

The PABS domain maps to 2 to 237; it reads ELWYTEQHTE…GHWLFGFASK (236 aa). Residue Gln-31 coordinates S-methyl-5'-thioadenosine. The spermidine site is built by His-62 and Asp-86. Residues Glu-106 and 137–138 contribute to the S-methyl-5'-thioadenosine site; that span reads DG. Asp-155 (proton acceptor) is an active-site residue. 155 to 158 is a binding site for spermidine; the sequence is DSTD. Residue Pro-162 coordinates S-methyl-5'-thioadenosine.

It belongs to the spermidine/spermine synthase family. In terms of assembly, homodimer or homotetramer.

Its subcellular location is the cytoplasm. The enzyme catalyses S-adenosyl 3-(methylsulfanyl)propylamine + putrescine = S-methyl-5'-thioadenosine + spermidine + H(+). Its pathway is amine and polyamine biosynthesis; spermidine biosynthesis; spermidine from putrescine: step 1/1. Functionally, catalyzes the irreversible transfer of a propylamine group from the amino donor S-adenosylmethioninamine (decarboxy-AdoMet) to putrescine (1,4-diaminobutane) to yield spermidine. This is Polyamine aminopropyltransferase from Alkaliphilus oremlandii (strain OhILAs) (Clostridium oremlandii (strain OhILAs)).